The primary structure comprises 188 residues: Elongation factor P (188 aa).

An N6-(3,6-diaminohexanoyl)-5-hydroxylysine modification is found at Lys34.

Belongs to the elongation factor P family. Is beta-lysylated on the epsilon-amino group of Lys-34 by the combined action of EpmA and EpmB, and then hydroxylated on the C5 position of the same residue by EpmC. Lysylation is critical for the stimulatory effect of EF-P on peptide-bond formation. The lysylation moiety would extend toward the peptidyltransferase center and stabilize the terminal 3-CCA end of the tRNA. The hydroxylation of the C5 position on Lys-34 would allow additional potential stabilizing hydrogen-bond interactions with the P-tRNA.

The protein resides in the cytoplasm. The protein operates within protein biosynthesis; polypeptide chain elongation. Functionally, involved in peptide bond synthesis. Alleviates ribosome stalling that occurs when 3 or more consecutive Pro residues or the sequence PPG is present in a protein, possibly by augmenting the peptidyl transferase activity of the ribosome. Modification of Lys-34 is required for alleviation. In Shigella boydii serotype 18 (strain CDC 3083-94 / BS512), this protein is Elongation factor P.